We begin with the raw amino-acid sequence, 291 residues long: Bifunctional protein FolD (291 aa).

NADP(+)-binding positions include 168–170 (GRG), Thr-195, and Val-236.

This sequence belongs to the tetrahydrofolate dehydrogenase/cyclohydrolase family. As to quaternary structure, homodimer.

The enzyme catalyses (6R)-5,10-methylene-5,6,7,8-tetrahydrofolate + NADP(+) = (6R)-5,10-methenyltetrahydrofolate + NADPH. The catalysed reaction is (6R)-5,10-methenyltetrahydrofolate + H2O = (6R)-10-formyltetrahydrofolate + H(+). It participates in one-carbon metabolism; tetrahydrofolate interconversion. Catalyzes the oxidation of 5,10-methylenetetrahydrofolate to 5,10-methenyltetrahydrofolate and then the hydrolysis of 5,10-methenyltetrahydrofolate to 10-formyltetrahydrofolate. The chain is Bifunctional protein FolD from Bifidobacterium longum (strain DJO10A).